The following is a 317-amino-acid chain: Dimethyladenosine transferase (317 aa).

The S-adenosyl-L-methionine site is built by His-37, Leu-39, Gly-64, Glu-85, Asp-113, and Asn-128.

It belongs to the class I-like SAM-binding methyltransferase superfamily. rRNA adenine N(6)-methyltransferase family.

It catalyses the reaction adenosine(1779)/adenosine(1780) in 18S rRNA + 4 S-adenosyl-L-methionine = N(6)-dimethyladenosine(1779)/N(6)-dimethyladenosine(1780) in 18S rRNA + 4 S-adenosyl-L-homocysteine + 4 H(+). In terms of biological role, specifically dimethylates two adjacent adenosines in the loop of a conserved hairpin near the 3'-end of 18S rRNA in the 40S particle. In Candida glabrata (strain ATCC 2001 / BCRC 20586 / JCM 3761 / NBRC 0622 / NRRL Y-65 / CBS 138) (Yeast), this protein is Dimethyladenosine transferase (DIM1).